The sequence spans 430 residues: Probable sugar isomerase mlr5709 (430 aa).

Histidine 257, aspartate 289, and aspartate 291 together coordinate Mn(2+).

It belongs to the rhamnose isomerase family. The cofactor is Mn(2+).

The protein is Probable sugar isomerase mlr5709 of Mesorhizobium japonicum (strain LMG 29417 / CECT 9101 / MAFF 303099) (Mesorhizobium loti (strain MAFF 303099)).